Here is a 271-residue protein sequence, read N- to C-terminus: Phosphate import ATP-binding protein PstB 2 (271 aa).

Residues 25-266 (MATEDLHVYY…PQEKQTEDYI (242 aa)) form the ABC transporter domain. 57–64 (GPSGCGKS) provides a ligand contact to ATP.

This sequence belongs to the ABC transporter superfamily. Phosphate importer (TC 3.A.1.7) family. In terms of assembly, the complex is composed of two ATP-binding proteins (PstB), two transmembrane proteins (PstC and PstA) and a solute-binding protein (PstS).

Its subcellular location is the cell membrane. The catalysed reaction is phosphate(out) + ATP + H2O = ADP + 2 phosphate(in) + H(+). Its function is as follows. Part of the ABC transporter complex PstSACB involved in phosphate import. Responsible for energy coupling to the transport system. The protein is Phosphate import ATP-binding protein PstB 2 of Listeria monocytogenes serovar 1/2a (strain ATCC BAA-679 / EGD-e).